The following is a 276-amino-acid chain: Undecaprenyl-diphosphatase (276 aa).

6 consecutive transmembrane segments (helical) span residues 43 to 63 (RAMAFNIIIQLAAILAVVWEF), 85 to 105 (ANLLLAFMPAVVLGVLFADLI), 109 to 129 (LFNPITVATALVIGGVIMLWA), 183 to 203 (AATEFSFFLAMPTMVGAAVYS), 214 to 234 (SDLPVFAIGFVTSFIFAMIAV), and 249 to 269 (FAWYRIAFGLLILATWQFGWV).

Belongs to the UppP family.

Its subcellular location is the cell inner membrane. The catalysed reaction is di-trans,octa-cis-undecaprenyl diphosphate + H2O = di-trans,octa-cis-undecaprenyl phosphate + phosphate + H(+). In terms of biological role, catalyzes the dephosphorylation of undecaprenyl diphosphate (UPP). Confers resistance to bacitracin. The chain is Undecaprenyl-diphosphatase from Pseudomonas putida (strain W619).